The following is a 353-amino-acid chain: Lysophosphatidic acid receptor 3 (353 aa).

Over 1–31 (MNECHYDKHMDFFYNRSNTDTVDDWTGTKLV) the chain is Extracellular. The N-linked (GlcNAc...) asparagine glycan is linked to asparagine 15. The chain crosses the membrane as a helical span at residues 32–52 (IVLCVGTFFCLFIFFSNSLVI). Over 53 to 67 (AAVIKNRKFHFPFYY) the chain is Cytoplasmic. Residues 68–88 (LLANLAAADFFAGIAYVFLMF) traverse the membrane as a helical segment. The Extracellular portion of the chain corresponds to 89–101 (NTGPVSKTLTVNR). A helical transmembrane segment spans residues 102-124 (WFLRQGLLDSSLTASLTNLLVIA). The Cytoplasmic segment spans residues 125-146 (VERHMSIMRMRVHSNLTKKRVT). The chain crosses the membrane as a helical span at residues 147 to 167 (LLILLVWAIAIFMGAVPTLGW). Residues 168 to 186 (NCLCNISACSSLAPIYSRS) are Extracellular-facing. A glycan (N-linked (GlcNAc...) asparagine) is linked at asparagine 172. The chain crosses the membrane as a helical span at residues 187–207 (YLVFWTVSNLMAFLIMVVVYL). The Cytoplasmic segment spans residues 208–240 (RIYVYVKRKTNVLSPHTSGSISRRRTPMKLMKT). Residues 241–261 (VMTVLGAFVVCWTPGLVVLLL) traverse the membrane as a helical segment. The Extracellular segment spans residues 262-276 (DGLNCRQCGVQHVKR). Residues 277-297 (WFLLLALLNSVVNPIIYSYKD) form a helical membrane-spanning segment. The Cytoplasmic portion of the chain corresponds to 298 to 353 (EDMYGTMKKMICCFSQENPERRPSRIPSTVLSRSDTGSQYIEDSISQGAVCNKSTS). Residue cysteine 309 is the site of S-palmitoyl cysteine attachment.

It belongs to the G-protein coupled receptor 1 family. As to expression, most abundantly expressed in prostate, testes, pancreas, and heart, with moderate levels in lung and ovary. No detectable expression in brain, placenta, liver, skeletal muscle, kidney, spleen, thymus, small intestine, colon, or peripheral blood leukocytes.

It is found in the cell membrane. In terms of biological role, receptor for lysophosphatidic acid (LPA), a mediator of diverse cellular activities. May play a role in the development of ovarian cancer. Seems to be coupled to the G(i)/G(o) and G(q) families of heteromeric G proteins. The polypeptide is Lysophosphatidic acid receptor 3 (LPAR3) (Homo sapiens (Human)).